Here is a 152-residue protein sequence, read N- to C-terminus: Peptide deformylase (152 aa).

Fe cation contacts are provided by C88 and H130. E131 is a catalytic residue. Position 134 (H134) interacts with Fe cation.

The protein belongs to the polypeptide deformylase family. It depends on Fe(2+) as a cofactor.

The enzyme catalyses N-terminal N-formyl-L-methionyl-[peptide] + H2O = N-terminal L-methionyl-[peptide] + formate. In terms of biological role, removes the formyl group from the N-terminal Met of newly synthesized proteins. Requires at least a dipeptide for an efficient rate of reaction. N-terminal L-methionine is a prerequisite for activity but the enzyme has broad specificity at other positions. The protein is Peptide deformylase of Carboxydothermus hydrogenoformans (strain ATCC BAA-161 / DSM 6008 / Z-2901).